We begin with the raw amino-acid sequence, 424 residues long: DNA primase DnaG (424 aa).

In terms of domain architecture, Toprim spans 166-241 (DTIIIVEGRA…KVDFIARAPE (76 aa)). Residues Glu-172, Asp-215, and Asp-217 each contribute to the Mg(2+) site.

Belongs to the archaeal DnaG primase family. In terms of assembly, forms a ternary complex with MCM helicase and DNA. Component of the archaeal exosome complex. The cofactor is Mg(2+).

It catalyses the reaction ssDNA + n NTP = ssDNA/pppN(pN)n-1 hybrid + (n-1) diphosphate.. RNA polymerase that catalyzes the synthesis of short RNA molecules used as primers for DNA polymerase during DNA replication. Also part of the exosome, which is a complex involved in RNA degradation. Acts as a poly(A)-binding protein that enhances the interaction between heteromeric, adenine-rich transcripts and the exosome. The sequence is that of DNA primase DnaG from Staphylothermus marinus (strain ATCC 43588 / DSM 3639 / JCM 9404 / F1).